Here is a 641-residue protein sequence, read N- to C-terminus: Epstein-Barr nuclear antigen 1 (641 aa).

Residues 1 to 14 (MSDEGPGTGPGNGL) are compositionally biased toward gly residues. Disordered stretches follow at residues 1-124 (MSDE…AGGA) and 168-478 (GAGA…NPKF). Over residues 41 to 50 (RGRGRGRGRG) the composition is skewed to basic residues. Gly residues-rich tracts occupy residues 51–62 (GGRPGAPGGSGS), 84–124 (GAHG…AGGA), and 168–352 (GAGA…GSGG). Positions 325–376 (GGGGRGRGGSGGRGRGGSGGRGRGGSGGRRGRGRERARGRSRERARGRGRGR) are interaction with host C1QBP/P32. Residues 328–378 (GRGRGGSGGRGRGGSGGRGRGGSGGRRGRGRERARGRSRERARGRGRGRGE) form a chromosome-tethering GR2 region. Residues 358–381 (RERARGRSRERARGRGRGRGEKRP) are compositionally biased toward basic and acidic residues. Residues 379–386 (KRPRSPSS) are nuclear localization signal. The span at 383 to 394 (SPSSQSSSSGSP) shows a compositional bias: low complexity. A phosphoserine mark is found at Ser-385 and Ser-393. The interval 387–395 (QSSSSGSPP) is interaction with host CSNK2B. Positions 436 to 450 (QGPTDDPGEGPSTGP) are interaction with host USP7. A DBD/DD region spans residues 452–607 (GQGDGGRRKK…CSFDDGVDLP (156 aa)). Residues 458-470 (RRKKGGWFGKHRG) are compositionally biased toward basic residues. The DNA site is built by Lys-460, Lys-461, and Tyr-518. The active-site For site-specific DNA cleavage activity is Tyr-518. Residues 612 to 641 (PMVEGAAAEGDDGDDGDEGGDGDEGEEGQE) are disordered. The span at 620-641 (EGDDGDDGDEGGDGDEGEEGQE) shows a compositional bias: acidic residues.

It belongs to the herpesviridae EBNA1 family. As to quaternary structure, homodimer. Dimers can assemble into higher-order oligomers like a homohexamer. Binding to the DS element involves 2 dimers of EBNA1. Interacts with human USP7; this interaction is independent and simultaneous to EBNA1 interaction with CSNK2B as well as necessary for PML nuclear bodies disruption by EBNA1. Interacts with host CSNK2B (via KSSR motif); the interaction requires phosphorylation of EBNA1, is independent and simultaneous to EBNA1 interaction with USP7 as well as necessary for PML nuclear bodies disruption by EBNA1. EBNA1, USP7 and CSNK2B form a ternary complex. EBNA1, USP7 and CSNK2B form a ternary complex. Interacts with human EBP2; it is not clear if this interaction is linked with the ability of EBNA1 to associate with host mitotic chromosomes. Interacts with BGLF4; this interaction facilitates the switch from latent to lytic DNA replication by down-regulating EBNA1 replication function. Interacts with human PAX5; this interaction promotes EBNA1-dependent transcription. Interacts with host KPNA1/Importin subunit alpha-5; this interaction allows the nuclear import of EBNA1. Interacts with host KPNA2/Importin subunit alpha-1; this interaction allows the nuclear import of EBNA1. Interacts with host C1QBP/P32. Interacts with host BIRC5/Survivin; this interaction is probably important for EBV episome maintenance in Burkitt's lymphoma host cells. Post-translationally, phosphorylation at Ser-385 increases the nuclear import efficiency of EBNA1. In terms of processing, phosphorylation at Ser-393 is required for interaction with CSNK2B.

The protein localises to the host nucleus. Its function is as follows. Responsible for the origin of replication (oriP) dependent replication and maintenance of viral episomes during latent infection. EBNA1 dimer interacts with the DS (dyad symmetry) element within the origin of replication oriP and with a host mitotic chromosome to initiate viral DNA replication during latency. EBNA1 binding to DS recruits the host origin recognition complex (ORC). Governs the faithful mitotic segregation of the viral episomes by binding both the FR (family of repeats) element within oriP and the host mitotic chromosomes. Forms a cell cycle-dependent tyrosine-dependent DNA cross-link and single-strand cleavage at oriP required for terminating replication and maintaining viral episomes. Counteracts the stabilization of host p53/TP53 by host USP7, thereby decreasing apoptosis and increasing host cell survival. Induces degradation of host PML through the ubiquitin-proteasome system, which promotes lytic reactivation and may impair the host cell DNA repair. Increases the association of CK2 with PML proteins which increases the phosphorylation of PML proteins by CK2, triggering the polyubiquitylation and degradation of PML. Displays inhibitory effects on a SUMO2-modified complex that includes STUB1, KAP1 and USP7. This inhibitory effect possibly participates to the maintenance of latency linked to PML silencing. The protein is Epstein-Barr nuclear antigen 1 (EBNA1) of Epstein-Barr virus (strain GD1) (HHV-4).